Reading from the N-terminus, the 319-residue chain is Acetyl-coenzyme A carboxylase carboxyl transferase subunit alpha (319 aa).

One can recognise a CoA carboxyltransferase C-terminal domain in the interval 39–293 (RLQKKSNDLT…KAVLEKQLHE (255 aa)).

The protein belongs to the AccA family. As to quaternary structure, acetyl-CoA carboxylase is a heterohexamer composed of biotin carboxyl carrier protein (AccB), biotin carboxylase (AccC) and two subunits each of ACCase subunit alpha (AccA) and ACCase subunit beta (AccD).

Its subcellular location is the cytoplasm. The enzyme catalyses N(6)-carboxybiotinyl-L-lysyl-[protein] + acetyl-CoA = N(6)-biotinyl-L-lysyl-[protein] + malonyl-CoA. Its pathway is lipid metabolism; malonyl-CoA biosynthesis; malonyl-CoA from acetyl-CoA: step 1/1. Its function is as follows. Component of the acetyl coenzyme A carboxylase (ACC) complex. First, biotin carboxylase catalyzes the carboxylation of biotin on its carrier protein (BCCP) and then the CO(2) group is transferred by the carboxyltransferase to acetyl-CoA to form malonyl-CoA. In Neisseria meningitidis serogroup B (strain ATCC BAA-335 / MC58), this protein is Acetyl-coenzyme A carboxylase carboxyl transferase subunit alpha.